A 320-amino-acid chain; its full sequence is MKLALSLFLLSGSLAQYSNPGACSGDCWGHDPGFYQRVSDGRYYRFSTGGGIQIHASDNLEGPWEAVGEALPGGSVVDHAGSTNLWAPDIHYEASTNLYYMYYSVSTLGSRDSVIGVATSPNLQPNWTDHGALFRSQAGGNYNAIDANWASIGGSPILTFGSYWNGIHQLPLAGPLSLADGATPTQIAYNSSGNHAIEAGFVFYRRGWYYLTFSSGRAGSYDTNPPATGEEYRIVVCRSASGTGDFVDKSGRSCLTDNGGTTILASHGNVYGPGGQGVFEDRTRGWVLYYHYANPDIGLSTGQYQFGWNVLQWADGWPSV.

Positions 1 to 15 are cleaved as a signal peptide; that stretch reads MKLALSLFLLSGSLA. The Proton acceptor role is filled by Asp31. Asn126 and Asn190 each carry an N-linked (GlcNAc...) asparagine glycan. Glu198 (proton donor) is an active-site residue.

Belongs to the glycosyl hydrolase 43 family.

The protein localises to the secreted. The catalysed reaction is Endohydrolysis of (1-&gt;5)-alpha-arabinofuranosidic linkages in (1-&gt;5)-arabinans.. Its pathway is glycan metabolism; L-arabinan degradation. Functionally, endo-1,5-alpha-L-arabinanase involved in degradation of pectin. Its preferred substrate is linear 1,5-alpha-L-arabinan. The protein is Arabinan endo-1,5-alpha-L-arabinosidase C (abnC) of Emericella nidulans (strain FGSC A4 / ATCC 38163 / CBS 112.46 / NRRL 194 / M139) (Aspergillus nidulans).